Reading from the N-terminus, the 231-residue chain is F-box protein SKIP8 (231 aa).

Positions 1–24 are disordered; the sequence is MPSTPLANGGTPPMGGGERTTVTT. The F-box domain maps to 34-80; it reads VSMMEQLVPEITTHALSYLDYPSLCRLSMTNSLMRKAANDDNAWKAL.

In terms of assembly, part of a SCF (ASK-cullin-F-box) protein ligase complex. Interacts with SKP1A/ASK1.

The protein operates within protein modification; protein ubiquitination. Functionally, component of SCF(ASK-cullin-F-box) E3 ubiquitin ligase complexes, which may mediate the ubiquitination and subsequent proteasomal degradation of target proteins. The sequence is that of F-box protein SKIP8 (SKIP8) from Arabidopsis thaliana (Mouse-ear cress).